The sequence spans 194 residues: Imidazoleglycerol-phosphate dehydratase (194 aa).

This sequence belongs to the imidazoleglycerol-phosphate dehydratase family.

It localises to the cytoplasm. It carries out the reaction D-erythro-1-(imidazol-4-yl)glycerol 3-phosphate = 3-(imidazol-4-yl)-2-oxopropyl phosphate + H2O. It functions in the pathway amino-acid biosynthesis; L-histidine biosynthesis; L-histidine from 5-phospho-alpha-D-ribose 1-diphosphate: step 6/9. The sequence is that of Imidazoleglycerol-phosphate dehydratase from Thermoanaerobacter pseudethanolicus (strain ATCC 33223 / 39E) (Clostridium thermohydrosulfuricum).